We begin with the raw amino-acid sequence, 293 residues long: 4-hydroxy-tetrahydrodipicolinate synthase (293 aa).

Threonine 44 is a pyruvate binding site. Catalysis depends on tyrosine 132, which acts as the Proton donor/acceptor. Residue lysine 161 is the Schiff-base intermediate with substrate of the active site. Pyruvate is bound at residue isoleucine 203.

It belongs to the DapA family. As to quaternary structure, homotetramer; dimer of dimers.

The protein resides in the cytoplasm. The enzyme catalyses L-aspartate 4-semialdehyde + pyruvate = (2S,4S)-4-hydroxy-2,3,4,5-tetrahydrodipicolinate + H2O + H(+). It functions in the pathway amino-acid biosynthesis; L-lysine biosynthesis via DAP pathway; (S)-tetrahydrodipicolinate from L-aspartate: step 3/4. Its function is as follows. Catalyzes the condensation of (S)-aspartate-beta-semialdehyde [(S)-ASA] and pyruvate to 4-hydroxy-tetrahydrodipicolinate (HTPA). The protein is 4-hydroxy-tetrahydrodipicolinate synthase of Persephonella marina (strain DSM 14350 / EX-H1).